Consider the following 541-residue polypeptide: Chaperonin GroEL 1 (541 aa).

ATP is bound by residues 29–32 (TIGP), 86–90 (DGTTT), Gly415, 479–481 (NAA), and Asp495.

This sequence belongs to the chaperonin (HSP60) family. As to quaternary structure, forms a cylinder of 14 subunits composed of two heptameric rings stacked back-to-back. Interacts with the co-chaperonin GroES.

The protein resides in the cytoplasm. The catalysed reaction is ATP + H2O + a folded polypeptide = ADP + phosphate + an unfolded polypeptide.. In terms of biological role, together with its co-chaperonin GroES, plays an essential role in assisting protein folding. The GroEL-GroES system forms a nano-cage that allows encapsulation of the non-native substrate proteins and provides a physical environment optimized to promote and accelerate protein folding. In Streptomyces coelicolor (strain ATCC BAA-471 / A3(2) / M145), this protein is Chaperonin GroEL 1.